Here is a 263-residue protein sequence, read N- to C-terminus: Lens fiber major intrinsic protein (263 aa).

At 1-9 (MWELRSASF) the chain is on the cytoplasmic side. The helical transmembrane segment at 10–29 (WRAIFAEFFATLFYVFFGLG) threads the bilayer. Residues 30–41 (SSLRWAPGPLHV) are Extracellular-facing. Residues 42 to 59 (LQVALAFGLALATLVQTV) form a helical membrane-spanning segment. Residues 60–61 (GH) are Cytoplasmic-facing. Residues 62–77 (ISGAHVNPAVTFAFLV) constitute an intramembrane region (discontinuously helical). Positions 68–70 (NPA) match the NPA 1 motif. Residues 78-82 (GSQMS) lie on the Cytoplasmic side of the membrane. A helical membrane pass occupies residues 83–106 (LLRAFCYIAAQLLGAVAGAAVLYS). The Extracellular portion of the chain corresponds to 107 to 127 (VTPPAVRGNLALNTLHAGVSV). A helical transmembrane segment spans residues 128 to 148 (GQATTVEIFLTLQFVLCIFAT). At 149–156 (YDERRNGR) the chain is on the cytoplasmic side. A helical membrane pass occupies residues 157 to 175 (MGSVALAVGFSLTLGHLFG). Residues 176-178 (MYY) are Extracellular-facing. Positions 179–193 (TGAGMNPARSFAPAI) form an intramembrane region, discontinuously helical. The short motif at 184-186 (NPA) is the NPA 2 element. At 194–200 (LTRNFSN) the chain is on the extracellular side. Residues 201–222 (HWVYWVGPIIGGGLGSLLYDFL) form a helical membrane-spanning segment. The Cytoplasmic segment spans residues 223–263 (LFPRLKSVSERLSILKGARPSDSNGQPEGTGEPVELKTQAL). The interaction with CALM stretch occupies residues 227–237 (LKSVSERLSIL). Phosphoserine occurs at positions 235, 243, and 245. The disordered stretch occupies residues 240 to 263 (ARPSDSNGQPEGTGEPVELKTQAL). Asn-246 carries the deamidated asparagine modification.

The protein belongs to the MIP/aquaporin (TC 1.A.8) family. In terms of assembly, homotetramer; each monomer provides an independent water pore. Two homotetramers on opposing membranes can dimerize, forming a cell-cell junction. Interacts with CALM; the calcium-calmodulin/CALM complex interacts with the cytoplasmic domains of two aquaporins, leading to channel closure. Interacts with BFSP1 (via C-terminus); prevents calcium-dependent inhibition of the water channel activity. Subject to partial proteolytic cleavage in the eye lens core. Partial proteolysis promotes interactions between tetramers from adjoining membranes. In terms of processing, fatty acylated at Met-1 and Lys-238. The acyl modifications, in decreasing order of ion abundance, are: oleoyl (C18:1) &gt; palmitoyl (C16:0) &gt; stearoyl (C18:0) &gt; eicosenoyl (C20:1) &gt; dihomo-gamma-linolenoyl (C20:3) &gt; palmitoleoyl (C16:1) &gt; eicosadienoyl (C20:2).

It localises to the cell membrane. Its subcellular location is the cell junction. It carries out the reaction H2O(in) = H2O(out). Its activity is regulated as follows. The water channel activity is inhibited by calcium through calmodulin/CALM. In terms of biological role, aquaporins form homotetrameric transmembrane channels, with each monomer independently mediating water transport across the plasma membrane along its osmotic gradient. Specifically expressed in lens fiber cells, this aquaporin is crucial for maintaining lens water homeostasis and transparency. Beyond water permeability, it also acts as a cell-to-cell adhesion molecule, forming thin junctions between lens fiber cells that are essential for maintaining the ordered structure and transparency of the lens. This Rattus norvegicus (Rat) protein is Lens fiber major intrinsic protein.